The primary structure comprises 359 residues: Membrane-bound lytic murein transglycosylase C (359 aa).

An N-terminal signal peptide occupies residues 1 to 16 (MKKYLALALIAPLLIS). The N-palmitoyl cysteine moiety is linked to residue Cys-17. The S-diacylglycerol cysteine moiety is linked to residue Cys-17.

Belongs to the transglycosylase Slt family.

The protein localises to the cell outer membrane. The enzyme catalyses Exolytic cleavage of the (1-&gt;4)-beta-glycosidic linkage between N-acetylmuramic acid (MurNAc) and N-acetylglucosamine (GlcNAc) residues in peptidoglycan, from either the reducing or the non-reducing ends of the peptidoglycan chains, with concomitant formation of a 1,6-anhydrobond in the MurNAc residue.. Its function is as follows. Murein-degrading enzyme. May play a role in recycling of muropeptides during cell elongation and/or cell division. This Escherichia fergusonii (strain ATCC 35469 / DSM 13698 / CCUG 18766 / IAM 14443 / JCM 21226 / LMG 7866 / NBRC 102419 / NCTC 12128 / CDC 0568-73) protein is Membrane-bound lytic murein transglycosylase C.